We begin with the raw amino-acid sequence, 150 residues long: Anthrone oxygenase gedH (150 aa).

4 helical membrane passes run 1–21, 41–61, 73–93, and 128–148; these read MANP…PVFL, GHKL…WVAA, PVLA…CMVS, and LFPL…LVGG.

Belongs to the anthrone oxygenase family.

Its subcellular location is the membrane. It carries out the reaction emodin anthrone + O2 = emodin + H2O + H(+). It functions in the pathway secondary metabolite biosynthesis. Anthrone oxygenase; part of the gene cluster that mediates the biosynthesis of geodin, an intermediate in the biosynthesis of other natural products. The pathway begins with the synthesis of atrochrysone thioester by the polyketide synthase (PKS) gedC. The atrochrysone carboxyl ACP thioesterase gedB then breaks the thioester bond and releases the atrochrysone carboxylic acid from gedC. The atrochrysone carboxylic acid is then converted to atrochrysone which is further transformed into emodin anthrone. The next step is performed by the emodin anthrone oxygenase gedH that catalyzes the oxidation of emodinanthrone to emodin. Emodin O-methyltransferase encoded probably by gedA then catalyzes methylation of the 8-hydroxy group of emodin to form questin. Ring cleavage of questin by questin oxidase gedK leads to desmethylsulochrin via several intermediates including questin epoxide. Another methylation step probably catalyzed by methyltransferase gedG leads to the formation of sulochrin which is further converted to dihydrogeodin by the sulochrin halogenase gedL. Finally, the dihydrogeodin oxidase gedJ catalyzes the stereospecific phenol oxidative coupling reaction converting dihydrogeodin to geodin. In Aspergillus terreus (strain NIH 2624 / FGSC A1156), this protein is Anthrone oxygenase gedH.